We begin with the raw amino-acid sequence, 73 residues long: Antimicrobial peptide TsAP-1 (73 aa).

Residues 1 to 22 form the signal peptide; it reads MQIKHLITLFFLVLIVADQCSA. A Lysine amide modification is found at K39. Residues 45 to 73 constitute a propeptide that is removed on maturation; the sequence is EISAQIEQYKDLQKREAELEELLDRLPMY.

Expressed by the venom gland.

The protein localises to the secreted. Its function is as follows. Has a low antimicrobial activity against S.aureus, E.coli, and C.albicans (MICs 120-160 uM). Has a low hemolytic activity (4% at 160 uM). Also inhibits the growth of two cancer cell lines on a total of five (the squamous carcinoma cell line H157 (IC(50)=55.9 uM) and the lung adenocarcinoma cell line H838 (IC(50)=52.5 uM)). The chain is Antimicrobial peptide TsAP-1 from Tityus serrulatus (Brazilian scorpion).